The sequence spans 327 residues: Transcription factor bHLH48 (327 aa).

The interval 137-179 is disordered; it reads EPAETDSMVENQNQSYSSGKRKEREKKVKSSTKKNKSSVESDK. Positions 191-241 constitute a bHLH domain; it reads QATDNHSLAERARREKINARMKLLQELVPGCDKIQGTALVLDEIINHVQTL.

Homodimer. Expressed in leaves, stems, and flowers.

The protein localises to the nucleus. The sequence is that of Transcription factor bHLH48 (BHLH48) from Arabidopsis thaliana (Mouse-ear cress).